Consider the following 407-residue polypeptide: Homeobox even-skipped homolog protein 1 (407 aa).

2 disordered regions span residues 29 to 120 (EAVG…SDFY) and 137 to 179 (EYQH…ACSA). The span at 102–114 (DSLSGQGQPSSSD) shows a compositional bias: polar residues. Positions 183–242 (MRRYRTAFTREQIARLEKEFYRENYVSRPRRCELAAALNLPETTIKVWFQNRRMKDKRQR) form a DNA-binding region, homeobox.

It belongs to the even-skipped homeobox family.

The protein localises to the nucleus. May play a role in the specification of neuronal cell types. This chain is Homeobox even-skipped homolog protein 1 (EVX1), found in Homo sapiens (Human).